The sequence spans 245 residues: 4-hydroxy-tetrahydrodipicolinate reductase (245 aa).

NAD(+) is bound by residues 7-12, 75-77, and 102-105; these read GAKGKV, GTT, and APNF. The Proton donor/acceptor role is filled by histidine 132. Histidine 133 is a binding site for (S)-2,3,4,5-tetrahydrodipicolinate. The active-site Proton donor is the lysine 136. 142–143 is a binding site for (S)-2,3,4,5-tetrahydrodipicolinate; the sequence is GT.

Belongs to the DapB family.

It is found in the cytoplasm. It carries out the reaction (S)-2,3,4,5-tetrahydrodipicolinate + NAD(+) + H2O = (2S,4S)-4-hydroxy-2,3,4,5-tetrahydrodipicolinate + NADH + H(+). It catalyses the reaction (S)-2,3,4,5-tetrahydrodipicolinate + NADP(+) + H2O = (2S,4S)-4-hydroxy-2,3,4,5-tetrahydrodipicolinate + NADPH + H(+). The protein operates within amino-acid biosynthesis; L-lysine biosynthesis via DAP pathway; (S)-tetrahydrodipicolinate from L-aspartate: step 4/4. Catalyzes the conversion of 4-hydroxy-tetrahydrodipicolinate (HTPA) to tetrahydrodipicolinate. The protein is 4-hydroxy-tetrahydrodipicolinate reductase of Mycobacterium ulcerans (strain Agy99).